The primary structure comprises 345 residues: Cytoskeleton protein RodZ (345 aa).

Residues 1 to 111 (MNTEASQDQT…LGKKHKKRDG (111 aa)) are Cytoplasmic-facing. Residues 19–79 (LRQARESLGL…KLVHLPEDEL (61 aa)) enclose the HTH cro/C1-type domain. Residues 30-49 (QQTVAERLCLKVSTIRDIEE) constitute a DNA-binding region (H-T-H motif). Residues 112-132 (WLMSFTWLIVLVVLGLTGAWW) form a helical; Signal-anchor for type II membrane protein membrane-spanning segment. Over 133–345 (WQNHQAQQAE…RVARLTVGVE (213 aa)) the chain is Periplasmic. The disordered stretch occupies residues 151–260 (SAQLSQNGGQ…LPTADAGVSG (110 aa)). A compositionally biased stretch (polar residues) spans 188-225 (PLTNHSGSAITNSATTSSVPKTTSTEPVDTANTNTTMH). A compositionally biased stretch (low complexity) spans 229 to 241 (AASAAVSPSQVPQ).

The protein belongs to the RodZ family.

The protein resides in the cell inner membrane. Cytoskeletal protein that is involved in cell-shape control through regulation of the length of the long axis. This chain is Cytoskeleton protein RodZ, found in Yersinia pestis (strain Pestoides F).